We begin with the raw amino-acid sequence, 263 residues long: Tryptophan 2,3-dioxygenase (263 aa).

Residues 32-36 (FIIVH), Tyr94, and Arg98 contribute to the substrate site. Residue His221 participates in heme binding. Thr235 contacts substrate.

This sequence belongs to the tryptophan 2,3-dioxygenase family. Homotetramer. Heme serves as cofactor.

It catalyses the reaction L-tryptophan + O2 = N-formyl-L-kynurenine. It functions in the pathway amino-acid degradation; L-tryptophan degradation via kynurenine pathway; L-kynurenine from L-tryptophan: step 1/2. Its function is as follows. Heme-dependent dioxygenase that catalyzes the oxidative cleavage of the L-tryptophan (L-Trp) pyrrole ring and converts L-tryptophan to N-formyl-L-kynurenine. Catalyzes the oxidative cleavage of the indole moiety. The protein is Tryptophan 2,3-dioxygenase of Erythrobacter litoralis (strain HTCC2594).